The primary structure comprises 439 residues: Glutamine synthetase (439 aa).

The region spanning 12–93 (SKIKFVQLVF…VYGFIYKDNK (82 aa)) is the GS beta-grasp domain. The 341-residue stretch at 99–439 (PRGILKRALE…EWELERYFFL (341 aa)) folds into the GS catalytic domain. E122 and E124 together coordinate Mg(2+). E172 lines the ATP pocket. Residues E177 and E184 each coordinate Mg(2+). Residue G229 coordinates L-glutamate. H233 serves as a coordination point for Mg(2+). Residues 235-237 (HIS) and S237 contribute to the ATP site. L-glutamate is bound by residues R283, E289, and R301. Positions 301, 306, and 313 each coordinate ATP. E318 lines the Mg(2+) pocket. R320 serves as a coordination point for L-glutamate.

This sequence belongs to the glutamine synthetase family. In terms of assembly, oligomer of 12 subunits arranged in the form of two hexagons. It depends on Mg(2+) as a cofactor.

Its subcellular location is the cytoplasm. The catalysed reaction is L-glutamate + NH4(+) + ATP = L-glutamine + ADP + phosphate + H(+). Probably involved in nitrogen metabolism via ammonium assimilation. Catalyzes the ATP-dependent biosynthesis of glutamine from glutamate and ammonia. The chain is Glutamine synthetase from Pyrococcus furiosus (strain ATCC 43587 / DSM 3638 / JCM 8422 / Vc1).